Reading from the N-terminus, the 1105-residue chain is Lysylphosphatidylglycerol biosynthesis bifunctional protein LysX (1105 aa).

A phosphatidylglycerol lysyltransferase region spans residues 1–603 (MTVTKPRSVQ…LLHHDGSAPD (603 aa)). 7 helical membrane-spanning segments follow: residues 20–40 (VPAA…LASI), 62–82 (FPDT…ALAA), 86–106 (IAWL…AADI), 117–137 (FGEN…VLGY), 154–174 (AVLV…VDLF), 186–203 (YVAN…DLFT), and 208–228 (VFLN…ATIV). The segment at 604–1105 (VSGLRQSAIA…TLPFPLAKPH (502 aa)) is lysine--tRNA ligase. Residues aspartate 1017 and glutamate 1024 each coordinate Mg(2+).

This sequence in the N-terminal section; belongs to the LPG synthetase family. The protein in the C-terminal section; belongs to the class-II aminoacyl-tRNA synthetase family. Requires Mg(2+) as cofactor.

It localises to the cell membrane. The enzyme catalyses tRNA(Lys) + L-lysine + ATP = L-lysyl-tRNA(Lys) + AMP + diphosphate. It catalyses the reaction L-lysyl-tRNA(Lys) + a 1,2-diacyl-sn-glycero-3-phospho-(1'-sn-glycerol) = a 1,2-diacyl-sn-glycero-3-phospho-1'-(3'-O-L-lysyl)-sn-glycerol + tRNA(Lys). Its function is as follows. Catalyzes the production of L-lysyl-tRNA(Lys)transfer and the transfer of a lysyl group from L-lysyl-tRNA(Lys) to membrane-bound phosphatidylglycerol (PG), which produces lysylphosphatidylglycerol (LPG), one of the components of the bacterial membrane with a positive net charge. LPG synthesis contributes to the resistance to cationic antimicrobial peptides (CAMPs) and likely protects M.tuberculosis against the CAMPs produced by competiting microorganisms (bacteriocins). In fact, the modification of anionic phosphatidylglycerol with positively charged L-lysine results in repulsion of the peptides. In Mycobacterium ulcerans (strain Agy99), this protein is Lysylphosphatidylglycerol biosynthesis bifunctional protein LysX (lysX).